The sequence spans 524 residues: D-3-phosphoglycerate dehydrogenase (524 aa).

NAD(+)-binding positions include 149–150 (RI), aspartate 169, 229–231 (CAR), and aspartate 255. Arginine 231 is an active-site residue. Residue glutamate 260 is part of the active site. Histidine 278 acts as the Proton donor in catalysis. 278 to 281 (HQGA) serves as a coordination point for NAD(+). An ACT domain is found at 452–524 (LAIIKHIDRP…NIKDVAVINL (73 aa)).

The protein belongs to the D-isomer specific 2-hydroxyacid dehydrogenase family.

It catalyses the reaction (2R)-3-phosphoglycerate + NAD(+) = 3-phosphooxypyruvate + NADH + H(+). It participates in amino-acid biosynthesis; L-serine biosynthesis; L-serine from 3-phospho-D-glycerate: step 1/3. The chain is D-3-phosphoglycerate dehydrogenase (serA) from Methanocaldococcus jannaschii (strain ATCC 43067 / DSM 2661 / JAL-1 / JCM 10045 / NBRC 100440) (Methanococcus jannaschii).